The following is a 143-amino-acid chain: UPF0260 protein plu2141 (143 aa).

The protein belongs to the UPF0260 family.

The polypeptide is UPF0260 protein plu2141 (Photorhabdus laumondii subsp. laumondii (strain DSM 15139 / CIP 105565 / TT01) (Photorhabdus luminescens subsp. laumondii)).